Consider the following 203-residue polypeptide: Small ribosomal subunit protein uS4 (203 aa).

The S4 RNA-binding domain maps to 93 to 156 (RRLDNVVYRL…AKVPAILEAV (64 aa)).

This sequence belongs to the universal ribosomal protein uS4 family. As to quaternary structure, part of the 30S ribosomal subunit. Contacts protein S5. The interaction surface between S4 and S5 is involved in control of translational fidelity.

Its function is as follows. One of the primary rRNA binding proteins, it binds directly to 16S rRNA where it nucleates assembly of the body of the 30S subunit. With S5 and S12 plays an important role in translational accuracy. This Streptococcus mutans serotype c (strain ATCC 700610 / UA159) protein is Small ribosomal subunit protein uS4.